The following is a 242-amino-acid chain: DNA-directed RNA polymerase III subunit rpc5 (242 aa).

Disordered regions lie at residues 1–22 (MSFSEDQAMEEAKLRNDETEEQ) and 153–172 (LKAAAGPSNSSSGTSTPRGP). The segment covering 155–172 (AAAGPSNSSSGTSTPRGP) has biased composition (low complexity).

Component of the RNA polymerase III (Pol III) complex consisting of 17 subunits.

The protein localises to the cytoplasm. It localises to the nucleus. DNA-dependent RNA polymerase catalyzes the transcription of DNA into RNA using the four ribonucleoside triphosphates as substrates. Specific peripheric component of RNA polymerase III which synthesizes small RNAs, such as 5S rRNA and tRNAs. The RPC53/RPC4-RPC37/RPC5 subcomplex is required for terminator recognition and reinitiation. This is DNA-directed RNA polymerase III subunit rpc5 (rpc37) from Schizosaccharomyces pombe (strain 972 / ATCC 24843) (Fission yeast).